The following is a 177-amino-acid chain: Putative adenylate kinase (177 aa).

Positions 10, 12, 13, 14, and 15 each coordinate ATP. The segment at 30–53 (DITEAVKKYKLYTEKDEDMDSYVI) is NMP. The segment at 103–113 (KRGYKPKKVLE) is LID. Position 104 (Arg104) interacts with ATP.

It belongs to the adenylate kinase family. AK6 subfamily. In terms of assembly, interacts with uS11. Not a structural component of 40S pre-ribosomes, but transiently interacts with them by binding to uS11.

The enzyme catalyses AMP + ATP = 2 ADP. It catalyses the reaction ATP + H2O = ADP + phosphate + H(+). In terms of biological role, broad-specificity nucleoside monophosphate (NMP) kinase that catalyzes the reversible transfer of the terminal phosphate group between nucleoside triphosphates and monophosphates. Also has ATPase activity. Involved in the late maturation steps of the 30S ribosomal particles, specifically 16S rRNA maturation. While NMP activity is not required for ribosome maturation, ATPase activity is. Associates transiently with small ribosomal subunit protein uS11. ATP hydrolysis breaks the interaction with uS11. May temporarily remove uS11 from the ribosome to enable a conformational change of the ribosomal RNA that is needed for the final maturation step of the small ribosomal subunit. The chain is Putative adenylate kinase from Methanocaldococcus jannaschii (strain ATCC 43067 / DSM 2661 / JAL-1 / JCM 10045 / NBRC 100440) (Methanococcus jannaschii).